The primary structure comprises 320 residues: L-lactate dehydrogenase 2 (320 aa).

NAD(+) is bound by residues 18–19 (AV), D40, and R45. Residues Q88, R94, and 126-129 (NPVD) contribute to the substrate site. NAD(+) is bound by residues 124–126 (ITN) and S149. 154–157 (DSAR) is a binding site for substrate. Beta-D-fructose 1,6-bisphosphate contacts are provided by residues R159 and 171 to 176 (KNVHAY). The active-site Proton acceptor is the H181. Y228 carries the phosphotyrosine modification. T237 serves as a coordination point for substrate.

Belongs to the LDH/MDH superfamily. LDH family. Homotetramer.

The protein localises to the cytoplasm. The catalysed reaction is (S)-lactate + NAD(+) = pyruvate + NADH + H(+). It functions in the pathway fermentation; pyruvate fermentation to lactate; (S)-lactate from pyruvate: step 1/1. With respect to regulation, allosterically activated by fructose 1,6-bisphosphate (FBP). Catalyzes the conversion of lactate to pyruvate. The protein is L-lactate dehydrogenase 2 of Bifidobacterium longum subsp. longum (strain ATCC 15707 / DSM 20219 / JCM 1217 / NCTC 11818 / E194b).